Reading from the N-terminus, the 336-residue chain is Succinylglutamate desuccinylase (336 aa).

Positions 59, 62, and 151 each coordinate Zn(2+). The active site involves Glu215.

This sequence belongs to the AspA/AstE family. Succinylglutamate desuccinylase subfamily. It depends on Zn(2+) as a cofactor.

The catalysed reaction is N-succinyl-L-glutamate + H2O = L-glutamate + succinate. It participates in amino-acid degradation; L-arginine degradation via AST pathway; L-glutamate and succinate from L-arginine: step 5/5. In terms of biological role, transforms N(2)-succinylglutamate into succinate and glutamate. This chain is Succinylglutamate desuccinylase, found in Pseudomonas fluorescens (strain Pf0-1).